The primary structure comprises 259 residues: Taurine import ATP-binding protein TauB (259 aa).

The ABC transporter domain maps to 4 to 233; it reads LELERISAQY…RYAAGESARA (230 aa). 38-45 provides a ligand contact to ATP; it reads GPSGSGKT.

Belongs to the ABC transporter superfamily. Taurine importer (TC 3.A.1.17.1) family. As to quaternary structure, the complex is composed of two ATP-binding proteins (TauB), two transmembrane proteins (TauC) and a solute-binding protein (TauA).

It is found in the cell inner membrane. It catalyses the reaction taurine(out) + ATP + H2O = taurine(in) + ADP + phosphate + H(+). In terms of biological role, part of the ABC transporter complex TauABC involved in taurine import. Responsible for energy coupling to the transport system. The chain is Taurine import ATP-binding protein TauB from Pseudomonas entomophila (strain L48).